We begin with the raw amino-acid sequence, 358 residues long: Alanine racemase (358 aa).

Catalysis depends on Lys35, which acts as the Proton acceptor; specific for D-alanine. An N6-(pyridoxal phosphate)lysine modification is found at Lys35. Arg130 is a binding site for substrate. The Proton acceptor; specific for L-alanine role is filled by Tyr255. Residue Met303 participates in substrate binding.

Belongs to the alanine racemase family. Pyridoxal 5'-phosphate is required as a cofactor.

It catalyses the reaction L-alanine = D-alanine. Its pathway is amino-acid biosynthesis; D-alanine biosynthesis; D-alanine from L-alanine: step 1/1. Functionally, catalyzes the interconversion of L-alanine and D-alanine. May also act on other amino acids. The protein is Alanine racemase (alr) of Shewanella baltica (strain OS223).